Here is a 185-residue protein sequence, read N- to C-terminus: Elongation factor P (185 aa).

This sequence belongs to the elongation factor P family.

It localises to the cytoplasm. It participates in protein biosynthesis; polypeptide chain elongation. In terms of biological role, involved in peptide bond synthesis. Stimulates efficient translation and peptide-bond synthesis on native or reconstituted 70S ribosomes in vitro. Probably functions indirectly by altering the affinity of the ribosome for aminoacyl-tRNA, thus increasing their reactivity as acceptors for peptidyl transferase. The polypeptide is Elongation factor P (Bordetella avium (strain 197N)).